The chain runs to 400 residues: S-adenosylmethionine synthase (400 aa).

136–141 lines the ATP pocket; that stretch reads GTGSTD.

Belongs to the AdoMet synthase 2 family. The cofactor is Mg(2+).

The catalysed reaction is L-methionine + ATP + H2O = S-adenosyl-L-methionine + phosphate + diphosphate. The protein operates within amino-acid biosynthesis; S-adenosyl-L-methionine biosynthesis; S-adenosyl-L-methionine from L-methionine: step 1/1. Its function is as follows. Catalyzes the formation of S-adenosylmethionine from methionine and ATP. The chain is S-adenosylmethionine synthase from Methanoregula boonei (strain DSM 21154 / JCM 14090 / 6A8).